The chain runs to 66 residues: Pteroicidin-alpha (66 aa).

The first 22 residues, 1–22 (MKCIALFLVLSMVVLMAEPGEA), serve as a signal peptide directing secretion. An Arginine amide; partial modification is found at R43. Positions 44-66 (GKNRDMAEQQELERAFDRERAFA) are excised as a propeptide.

This sequence belongs to the pleurocidin family. Post-translationally, this peptide exists in N-terminally amidated and non-amidated forms. The amidated form is more active and has a greater alpha-helix content than the non-amidated form. As to expression, expressed in gill, skin, intestine, spleen, anterior kidney, and blood cells.

It localises to the secreted. Its function is as follows. The amidated peptide is bactericidal on human pathogens like S.aureus or E.coli, as well as on the fish pathogen A.salmonicida. May also be active against a variety of fungi. It can kill bacteria in less than 30 minutes (S.aureus) and 120 minutes (V.vulnificus). It induces hemolysis of erythrocytes from human and fishes (sea bass and lesser-spotted dogfish). The non-amidated peptide only inhibits growth of human pathogens like S.aureus or E.coli, and the fish pathogen A.salmonicida. Induces hemolysis of erythrocytes from human and fishes (sea bass and lesser-spotted dogfish). In Pterois volitans (Red lionfish), this protein is Pteroicidin-alpha.